The following is a 319-amino-acid chain: UDP-3-O-acylglucosamine N-acyltransferase (319 aa).

His-230 functions as the Proton acceptor in the catalytic mechanism.

Belongs to the transferase hexapeptide repeat family. LpxD subfamily. As to quaternary structure, homotrimer.

The catalysed reaction is a UDP-3-O-[(3R)-3-hydroxyacyl]-alpha-D-glucosamine + a (3R)-hydroxyacyl-[ACP] = a UDP-2-N,3-O-bis[(3R)-3-hydroxyacyl]-alpha-D-glucosamine + holo-[ACP] + H(+). The protein operates within bacterial outer membrane biogenesis; LPS lipid A biosynthesis. Catalyzes the N-acylation of UDP-3-O-acylglucosamine using 3-hydroxyacyl-ACP as the acyl donor. Is involved in the biosynthesis of lipid A, a phosphorylated glycolipid that anchors the lipopolysaccharide to the outer membrane of the cell. The sequence is that of UDP-3-O-acylglucosamine N-acyltransferase from Campylobacter lari (strain RM2100 / D67 / ATCC BAA-1060).